Reading from the N-terminus, the 338-residue chain is Fructose-1,6-bisphosphatase class 1 (338 aa).

Residues glutamate 90, aspartate 112, leucine 114, and aspartate 115 each contribute to the Mg(2+) site. Residues 115-118 (DGSS), asparagine 207, and lysine 273 each bind substrate. Glutamate 279 serves as a coordination point for Mg(2+).

It belongs to the FBPase class 1 family. In terms of assembly, homotetramer. The cofactor is Mg(2+).

Its subcellular location is the cytoplasm. It catalyses the reaction beta-D-fructose 1,6-bisphosphate + H2O = beta-D-fructose 6-phosphate + phosphate. It functions in the pathway carbohydrate biosynthesis; gluconeogenesis. This is Fructose-1,6-bisphosphatase class 1 from Xanthomonas campestris pv. campestris (strain 8004).